The chain runs to 133 residues: Profilin (133 aa).

The protein belongs to the profilin family.

In terms of biological role, more likely to influence phosphoinositide metabolism than actin assembly. This chain is Profilin, found in Camelus.